We begin with the raw amino-acid sequence, 339 residues long: Phosphate acyltransferase (339 aa).

This sequence belongs to the PlsX family. Homodimer. Probably interacts with PlsY.

It is found in the cytoplasm. The enzyme catalyses a fatty acyl-[ACP] + phosphate = an acyl phosphate + holo-[ACP]. It participates in lipid metabolism; phospholipid metabolism. Catalyzes the reversible formation of acyl-phosphate (acyl-PO(4)) from acyl-[acyl-carrier-protein] (acyl-ACP). This enzyme utilizes acyl-ACP as fatty acyl donor, but not acyl-CoA. The sequence is that of Phosphate acyltransferase from Clostridium perfringens (strain SM101 / Type A).